The primary structure comprises 137 residues: Large ribosomal subunit protein uL16 (137 aa).

The segment covering 1–17 has biased composition (basic residues); sequence MLSPKRTKFRKQQRGRM. Positions 1-24 are disordered; sequence MLSPKRTKFRKQQRGRMRGNANSG.

It belongs to the universal ribosomal protein uL16 family. As to quaternary structure, part of the 50S ribosomal subunit.

In terms of biological role, binds 23S rRNA and is also seen to make contacts with the A and possibly P site tRNAs. This Trichodesmium erythraeum (strain IMS101) protein is Large ribosomal subunit protein uL16.